Reading from the N-terminus, the 62-residue chain is Large ribosomal subunit protein eL37 (62 aa).

Zn(2+)-binding residues include cysteine 20, cysteine 23, cysteine 35, and cysteine 38. The C4-type zinc finger occupies 20–38; it reads CRRCGRHSFNVAKGYCAAC.

It belongs to the eukaryotic ribosomal protein eL37 family. It depends on Zn(2+) as a cofactor.

Functionally, binds to the 23S rRNA. The polypeptide is Large ribosomal subunit protein eL37 (Desulfurococcus amylolyticus (strain DSM 18924 / JCM 16383 / VKM B-2413 / 1221n) (Desulfurococcus kamchatkensis)).